Reading from the N-terminus, the 624-residue chain is Aliphatic sulfonate oxidoreductase, WOR-like subunit (624 aa).

Positions 77, 93, 94, 96, 195, 196, 198, and 199 each coordinate tungstopterin. Aspartate 299, cysteine 302, and cysteine 306 together coordinate [4Fe-4S] cluster. Residues aspartate 353, leucine 357, aspartate 358, glycine 359, threonine 470, aspartate 490, isoleucine 494, cysteine 495, and asparagine 496 each contribute to the tungstopterin site. Cysteine 495 serves as a coordination point for [4Fe-4S] cluster. A disordered region spans residues 552 to 575 (KDDDNPPRFYEPLPSGPVKGKAPN).

This sequence belongs to the AOR/FOR family. Heterodimer composed of a small WOR5-S subunit, with four [4Fe-4S] clusters, and a large WOR5-L subunit, containing the active site tungsto-bispyranopterin cofactor as well as another [4Fe-4S] cluster. Requires [4Fe-4S] cluster as cofactor. Tungstopterin serves as cofactor.

The protein resides in the cytoplasm. The catalysed reaction is an aliphatic sulfonate + 4 oxidized [4Fe-4S]-[ferredoxin] + 2 H2O = 4 reduced [4Fe-4S]-[ferredoxin] + a carboxylate + sulfite + 6 H(+). The enzyme catalyses an aliphatic sulfonate + 2 oxidized [4Fe-4S]-[ferredoxin] + H2O = 2 reduced [4Fe-4S]-[ferredoxin] + an aldehyde + sulfite + 3 H(+). It carries out the reaction 2 oxidized [4Fe-4S]-[ferredoxin] + an aldehyde + H2O = 2 reduced [4Fe-4S]-[ferredoxin] + a carboxylate + 3 H(+). It catalyses the reaction 4 oxidized [4Fe-4S]-[ferredoxin] + taurine + 2 H2O = 4 reduced [4Fe-4S]-[ferredoxin] + sulfite + glycine + 6 H(+). The catalysed reaction is 2 oxidized [4Fe-4S]-[ferredoxin] + taurine + H2O = aminoacetaldehyde + 2 reduced [4Fe-4S]-[ferredoxin] + sulfite + 3 H(+). The enzyme catalyses aminoacetaldehyde + 2 oxidized [4Fe-4S]-[ferredoxin] + H2O = 2 reduced [4Fe-4S]-[ferredoxin] + glycine + 3 H(+). Functionally, WOR-like catalytic subunit of an oxidoreductase that can desulfonate and oxidize aliphatic sulfonates such as taurine. The activity involves two steps: an oxidative desulfonation reaction, followed by the activation of a second water molecule and oxidation of the resulting aldehyde. May be involved in the oxidation of various aliphatic sulfonates and also phosphonates. In vitro, has a broad substrate specificity with a high affinity for several substituted and nonsubstituted aliphatic and aromatic aldehydes with various chain lengths, with methyl viologen or benzyl viologen as electron acceptor. Ferredoxin is the physiological electron acceptor. This chain is Aliphatic sulfonate oxidoreductase, WOR-like subunit, found in Pyrococcus furiosus (strain ATCC 43587 / DSM 3638 / JCM 8422 / Vc1).